The following is a 246-amino-acid chain: Probable transcriptional regulatory protein CGSHiEE_01480 (246 aa).

It belongs to the TACO1 family.

It is found in the cytoplasm. The protein is Probable transcriptional regulatory protein CGSHiEE_01480 of Haemophilus influenzae (strain PittEE).